The sequence spans 512 residues: Activin receptor type-2B (512 aa).

A signal peptide spans 1–18; sequence MTAPWVALALLWGSLCAG. At 19-137 the chain is on the extracellular side; that stretch reads SGRGEAETRE…PPPTAPTLLT (119 aa). 5 disulfide bridges follow: Cys29/Cys59, Cys49/Cys77, Cys84/Cys103, Cys90/Cys102, and Cys104/Cys109. N-linked (GlcNAc...) asparagine glycosylation is found at Asn42 and Asn65. A helical transmembrane segment spans residues 138–158; it reads VLAYSLLPIGGLSLIVLLAFW. Residues 159 to 512 lie on the Cytoplasmic side of the membrane; it reads MYRHRKPPYG…VDLPPKESSI (354 aa). The 291-residue stretch at 190 to 480 folds into the Protein kinase domain; sequence LQLLEIKARG…AGCVEERVSL (291 aa). Residues 196–204 and Lys217 contribute to the ATP site; that span reads KARGRFGCV. Residue Asp321 is the Proton acceptor of the active site. The interval 491–512 is interaction with DYNLT1; it reads DCLVSLVTSVTNVDLPPKESSI.

This sequence belongs to the protein kinase superfamily. TKL Ser/Thr protein kinase family. TGFB receptor subfamily. In terms of assembly, forms an activin receptor complex with activin type II receptors such as ACVR1B. Interacts with VPS39. Interacts with DYNLT1. Interacts with BMP3. Interacts with BMP2. Interacts with BMP6. Mg(2+) serves as cofactor. Mn(2+) is required as a cofactor. Phosphorylated. Constitutive phosphorylation is in part catalyzed by its own kinase activity.

Its subcellular location is the cell membrane. The enzyme catalyses L-threonyl-[receptor-protein] + ATP = O-phospho-L-threonyl-[receptor-protein] + ADP + H(+). It carries out the reaction L-seryl-[receptor-protein] + ATP = O-phospho-L-seryl-[receptor-protein] + ADP + H(+). Its function is as follows. Transmembrane serine/threonine kinase activin type-2 receptor forming an activin receptor complex with activin type-1 serine/threonine kinase receptors (ACVR1, ACVR1B or ACVR1c). Transduces the activin signal from the cell surface to the cytoplasm and is thus regulating many physiological and pathological processes including neuronal differentiation and neuronal survival, hair follicle development and cycling, FSH production by the pituitary gland, wound healing, extracellular matrix production, immunosuppression and carcinogenesis. Activin is also thought to have a paracrine or autocrine role in follicular development in the ovary. Within the receptor complex, the type-2 receptors act as a primary activin receptors (binds activin-A/INHBA, activin-B/INHBB as well as inhibin-A/INHA-INHBA). The type-1 receptors like ACVR1B act as downstream transducers of activin signals. Activin binds to type-2 receptor at the plasma membrane and activates its serine-threonine kinase. The activated receptor type-2 then phosphorylates and activates the type-1 receptor. Once activated, the type-1 receptor binds and phosphorylates the SMAD proteins SMAD2 and SMAD3, on serine residues of the C-terminal tail. Soon after their association with the activin receptor and subsequent phosphorylation, SMAD2 and SMAD3 are released into the cytoplasm where they interact with the common partner SMAD4. This SMAD complex translocates into the nucleus where it mediates activin-induced transcription. Inhibitory SMAD7, which is recruited to ACVR1B through FKBP1A, can prevent the association of SMAD2 and SMAD3 with the activin receptor complex, thereby blocking the activin signal. Activin signal transduction is also antagonized by the binding to the receptor of inhibin-B via the IGSF1 inhibin coreceptor. The protein is Activin receptor type-2B (ACVR2B) of Homo sapiens (Human).